A 238-amino-acid chain; its full sequence is MTSYWNFDFYLSPPQPCSYLPDQTATNLFADPEAAMDIARYSTLVRLGFRRSGRLVYRPRCLHCSACQPARIPVAQFRPNRSQRRAWKFNQDLSACYRPVEFRAEHFDLFRRYLGTRHPQGGMDDSTPEDYLNFIASGWNETSLIEFRDGKEQLLAVAAVDALTDGLSAVYSFFDPNAKKRSLGTYIILWEIGEAKALNLPYVYLGYWIKNSHKMSYKSAFHPLEVYQDKKWSILKET.

The protein belongs to the R-transferase family. Bpt subfamily.

The protein resides in the cytoplasm. The enzyme catalyses N-terminal L-glutamyl-[protein] + L-leucyl-tRNA(Leu) = N-terminal L-leucyl-L-glutamyl-[protein] + tRNA(Leu) + H(+). The catalysed reaction is N-terminal L-aspartyl-[protein] + L-leucyl-tRNA(Leu) = N-terminal L-leucyl-L-aspartyl-[protein] + tRNA(Leu) + H(+). Functions in the N-end rule pathway of protein degradation where it conjugates Leu from its aminoacyl-tRNA to the N-termini of proteins containing an N-terminal aspartate or glutamate. This is Aspartate/glutamate leucyltransferase from Nitrosococcus oceani (strain ATCC 19707 / BCRC 17464 / JCM 30415 / NCIMB 11848 / C-107).